The chain runs to 862 residues: Taxadiene synthase (862 aa).

Mg(2+)-binding residues include Asp-613, Asp-617, Asn-757, Thr-761, and Glu-765. The DDXXD motif motif lies at 613 to 617; sequence DDMAD.

It belongs to the terpene synthase family. Mg(2+) serves as cofactor.

It carries out the reaction (2E,6E,10E)-geranylgeranyl diphosphate = taxa-4(5),11(12)-diene + diphosphate. It functions in the pathway alkaloid biosynthesis; taxol biosynthesis; taxa-4(20),11-dien-5alpha-ol from geranylgeranyl diphosphate: step 1/2. In terms of biological role, catalyzes the cyclization of the ubiquitous isoprenoid intermediate geranylgeranyl diphosphate to taxa-4,11-diene, the parent olefin with a taxane skeleton. This chain is Taxadiene synthase (TDC1), found in Taxus baccata (English yew).